The primary structure comprises 398 residues: Tryptophan synthase beta chain (398 aa).

An N6-(pyridoxal phosphate)lysine modification is found at Lys89.

It belongs to the TrpB family. Tetramer of two alpha and two beta chains. It depends on pyridoxal 5'-phosphate as a cofactor.

It catalyses the reaction (1S,2R)-1-C-(indol-3-yl)glycerol 3-phosphate + L-serine = D-glyceraldehyde 3-phosphate + L-tryptophan + H2O. It functions in the pathway amino-acid biosynthesis; L-tryptophan biosynthesis; L-tryptophan from chorismate: step 5/5. Its function is as follows. The beta subunit is responsible for the synthesis of L-tryptophan from indole and L-serine. The chain is Tryptophan synthase beta chain from Methanopyrus kandleri (strain AV19 / DSM 6324 / JCM 9639 / NBRC 100938).